The following is a 96-amino-acid chain: Invertase 7 (96 aa).

The first 19 residues, 1 to 19, serve as a signal peptide directing secretion; sequence MLLQAFIFLLAGFAAKISA. The N-linked (GlcNAc...) asparagine glycan is linked to Asn23. Substrate-binding positions include 39–42 and Gln60; that span reads WMND. Asp42 is a catalytic residue. N-linked (GlcNAc...) asparagine glycans are attached at residues Asn64 and Asn76.

It belongs to the glycosyl hydrolase 32 family.

The enzyme catalyses Hydrolysis of terminal non-reducing beta-D-fructofuranoside residues in beta-D-fructofuranosides.. The sequence is that of Invertase 7 (SUC7) from Saccharomyces cerevisiae (Baker's yeast).